A 183-amino-acid chain; its full sequence is Large ribosomal subunit protein uL6 (183 aa).

Belongs to the universal ribosomal protein uL6 family. As to quaternary structure, part of the 50S ribosomal subunit.

Functionally, this protein binds to the 23S rRNA, and is important in its secondary structure. It is located near the subunit interface in the base of the L7/L12 stalk, and near the tRNA binding site of the peptidyltransferase center. This chain is Large ribosomal subunit protein uL6, found in Chlamydia pneumoniae (Chlamydophila pneumoniae).